The primary structure comprises 216 residues: Transmembrane emp24 domain-containing protein eca (216 aa).

A signal peptide spans 1 to 20 (MRDQWICLALVLCALHSACG). At 21–183 (LYFHISETER…RHTSESTNSR (163 aa)) the chain is on the lumenal side. Residues 30-126 (RKCFIEEVPD…QLRVHLDIQV (97 aa)) enclose the GOLD domain. Residues 134–164 (ANVAQKEKLTELQLRIRQLLDQVEQITKEQN) are a coiled coil. Residues 184 to 203 (VLWWSLAQTVVLVCMGFWQM) form a helical membrane-spanning segment. Topologically, residues 204–216 (RHLKSFFEAKKLV) are cytoplasmic. A Prevents secretion from ER motif is present at residues 213–216 (KKLV).

It belongs to the EMP24/GP25L family.

It is found in the endoplasmic reticulum membrane. Functionally, eca and bai are essential, though not redundant, for dorsoventral patterning of the embryo. Specifically required during early embryogenesis for the activity of maternal tkv, while the zygotic tkv is not affected. The polypeptide is Transmembrane emp24 domain-containing protein eca (Drosophila mojavensis (Fruit fly)).